Here is a 309-residue protein sequence, read N- to C-terminus: Probable lipid kinase YegS-like (309 aa).

The DAGKc domain occupies methionine 1–histidine 134. ATP is bound by residues threonine 39, glycine 65–glutamate 71, and threonine 96. Residues leucine 219, aspartate 222, and leucine 224 each coordinate Mg(2+). Glutamate 280 functions as the Proton acceptor in the catalytic mechanism.

The protein belongs to the diacylglycerol/lipid kinase family. YegS lipid kinase subfamily. It depends on Mg(2+) as a cofactor. Ca(2+) is required as a cofactor.

The protein localises to the cytoplasm. Functionally, probably phosphorylates lipids; the in vivo substrate is unknown. This chain is Probable lipid kinase YegS-like, found in Xanthomonas euvesicatoria pv. vesicatoria (strain 85-10) (Xanthomonas campestris pv. vesicatoria).